Consider the following 249-residue polypeptide: Triosephosphate isomerase (249 aa).

9–11 (NWK) lines the substrate pocket. Histidine 95 (electrophile) is an active-site residue. Glutamate 167 acts as the Proton acceptor in catalysis. Substrate-binding positions include glycine 173, serine 213, and 234 to 235 (GG).

Belongs to the triosephosphate isomerase family. As to quaternary structure, homodimer.

Its subcellular location is the cytoplasm. The enzyme catalyses D-glyceraldehyde 3-phosphate = dihydroxyacetone phosphate. Its pathway is carbohydrate biosynthesis; gluconeogenesis. The protein operates within carbohydrate degradation; glycolysis; D-glyceraldehyde 3-phosphate from glycerone phosphate: step 1/1. Its function is as follows. Involved in the gluconeogenesis. Catalyzes stereospecifically the conversion of dihydroxyacetone phosphate (DHAP) to D-glyceraldehyde-3-phosphate (G3P). This chain is Triosephosphate isomerase, found in Solibacter usitatus (strain Ellin6076).